The sequence spans 499 residues: Dual specificity protein kinase CLK2 (499 aa).

The segment at 1-67 is disordered; sequence MPHPRRYHSS…SYDDRSSDRR (67 aa). Basic and acidic residues predominate over residues 8–21; that stretch reads HSSERGSRGSYREH. The span at 22 to 33 shows a compositional bias: basic residues; that stretch reads YRSRKHKRRRSR. A Phosphoserine; by PKB/AKT1 modification is found at S34. The span at 47 to 67 shows a compositional bias: basic and acidic residues; it reads REDSYHVRSRSSYDDRSSDRR. The residue at position 98 (S98) is a Phosphoserine. Residue Y99 is modified to Phosphotyrosine; by autocatalysis. Residues 101–143 form a disordered region; that stretch reads YQRENSSYRSQRSSRRKHRRRRRRSRTFSRSSSQHSSRRAKSV. A compositionally biased stretch (basic residues) spans 112–127; that stretch reads RSSRRKHRRRRRRSRT. T127 carries the phosphothreonine; by PKB/AKT1 modification. The residue at position 142 (S142) is a Phosphoserine; by autocatalysis. At Y153 the chain carries Phosphotyrosine. The 317-residue stretch at 163–479 folds into the Protein kinase domain; sequence YEIVSTLGEG…LGEALQHPFF (317 aa). ATP contacts are provided by residues 169-177 and K193; that span reads LGEGTFGRV. D290 (proton acceptor) is an active-site residue. T344 bears the Phosphothreonine; by PKB/AKT2 mark.

Belongs to the protein kinase superfamily. CMGC Ser/Thr protein kinase family. Lammer subfamily. Interacts with RBMX. Interacts with AKT1 and UBL5. Post-translationally, autophosphorylates on all three types of residues. Phosphorylation on Ser-34 and Thr-127 by AKT1 is induced by ionizing radiation or insulin. Phosphorylation plays a critical role in cell proliferation following low dose radiation and prevents cell death following high dose radiation. Phosphorylation at Thr-344 by PKB/AKT2 induces its kinase activity which is required for its stability. The phosphorylation status at Ser-142 influences its subnuclear localization; inhibition of phosphorylation at Ser-142 results in accumulation in the nuclear speckle. As to expression, endothelial cells. Expressed in androgen-dependent prostate cancer cells.

The protein resides in the nucleus. The protein localises to the nucleus speckle. The enzyme catalyses L-seryl-[protein] + ATP = O-phospho-L-seryl-[protein] + ADP + H(+). It catalyses the reaction L-threonyl-[protein] + ATP = O-phospho-L-threonyl-[protein] + ADP + H(+). It carries out the reaction L-tyrosyl-[protein] + ATP = O-phospho-L-tyrosyl-[protein] + ADP + H(+). Its activity is regulated as follows. 5,6-dichloro-1-b-D-ribofuranosylbenzimidazole (DRB) inhibits autophosphorylation. TG003 inhibits its kinase activity and affects the regulation of alternative splicing mediated by phosphorylation of SR proteins. In terms of biological role, dual specificity kinase acting on both serine/threonine and tyrosine-containing substrates. Phosphorylates serine- and arginine-rich (SR) proteins of the spliceosomal complex. May be a constituent of a network of regulatory mechanisms that enable SR proteins to control RNA splicing and can cause redistribution of SR proteins from speckles to a diffuse nucleoplasmic distribution. Acts as a suppressor of hepatic gluconeogenesis and glucose output by repressing PPARGC1A transcriptional activity on gluconeogenic genes via its phosphorylation. Phosphorylates PPP2R5B thereby stimulating the assembly of PP2A phosphatase with the PPP2R5B-AKT1 complex leading to dephosphorylation of AKT1. Phosphorylates: PTPN1, SRSF1 and SRSF3. Regulates the alternative splicing of tissue factor (F3) pre-mRNA in endothelial cells. Phosphorylates PAGE4 at several serine and threonine residues and this phosphorylation attenuates the ability of PAGE4 to potentiate the transcriptional activator activity of JUN. The sequence is that of Dual specificity protein kinase CLK2 (CLK2) from Homo sapiens (Human).